The primary structure comprises 597 residues: Elongation factor 4 (597 aa).

The tr-type G domain occupies 2–184 (DHIRNFSIIA…ALVAKVPPPK (183 aa)). GTP contacts are provided by residues 14–19 (DHGKST) and 131–134 (NKID).

The protein belongs to the TRAFAC class translation factor GTPase superfamily. Classic translation factor GTPase family. LepA subfamily.

It is found in the cell inner membrane. It carries out the reaction GTP + H2O = GDP + phosphate + H(+). Its function is as follows. Required for accurate and efficient protein synthesis under certain stress conditions. May act as a fidelity factor of the translation reaction, by catalyzing a one-codon backward translocation of tRNAs on improperly translocated ribosomes. Back-translocation proceeds from a post-translocation (POST) complex to a pre-translocation (PRE) complex, thus giving elongation factor G a second chance to translocate the tRNAs correctly. Binds to ribosomes in a GTP-dependent manner. This chain is Elongation factor 4, found in Paraburkholderia xenovorans (strain LB400).